Consider the following 523-residue polypeptide: 2-isopropylmalate synthase (523 aa).

The 263-residue stretch at 5–267 (VIIFDTTLRD…HTNINHHEIW (263 aa)) folds into the Pyruvate carboxyltransferase domain. Mn(2+) contacts are provided by D14, H202, H204, and N238. Positions 392–523 (RLDYFSVQSG…QNKENNKETV (132 aa)) are regulatory domain.

It belongs to the alpha-IPM synthase/homocitrate synthase family. LeuA type 1 subfamily. Homodimer. Requires Mn(2+) as cofactor.

It localises to the cytoplasm. It carries out the reaction 3-methyl-2-oxobutanoate + acetyl-CoA + H2O = (2S)-2-isopropylmalate + CoA + H(+). The protein operates within amino-acid biosynthesis; L-leucine biosynthesis; L-leucine from 3-methyl-2-oxobutanoate: step 1/4. Its function is as follows. Catalyzes the condensation of the acetyl group of acetyl-CoA with 3-methyl-2-oxobutanoate (2-ketoisovalerate) to form 3-carboxy-3-hydroxy-4-methylpentanoate (2-isopropylmalate). The protein is 2-isopropylmalate synthase of Salmonella paratyphi A (strain ATCC 9150 / SARB42).